Here is a 294-residue protein sequence, read N- to C-terminus: Sarcotoxin II-2 (294 aa).

The N-terminal stretch at 1-22 is a signal peptide; the sequence is MKSFVFFAACFAIVALNSLAHA. Residues 23–24 constitute a propeptide, removed by a dipeptidylpeptidase; sequence YP. Position 25 is a pyrrolidone carboxylic acid (glutamine 25). Arginine 293 is subject to Arginine amide.

This sequence belongs to the attacin/sarcotoxin-2 family. In terms of tissue distribution, synthesized by the fat body and is eventually secreted into the hemolymph.

The protein localises to the secreted. Sarcotoxin II is an antibacterial protein which plays a role in the inflammatory response of this insect. The main effect of sarcotoxin II on E.coli may be the inhibition of cell wall synthesis, including septum formation. This chain is Sarcotoxin II-2, found in Sarcophaga peregrina (Flesh fly).